Consider the following 280-residue polypeptide: Orotidine 5'-phosphate decarboxylase (280 aa).

The active-site Proton donor is Lys-97.

It belongs to the OMP decarboxylase family. Type 2 subfamily.

It carries out the reaction orotidine 5'-phosphate + H(+) = UMP + CO2. It participates in pyrimidine metabolism; UMP biosynthesis via de novo pathway; UMP from orotate: step 2/2. The protein is Orotidine 5'-phosphate decarboxylase (pyrF) of Corynebacterium efficiens (strain DSM 44549 / YS-314 / AJ 12310 / JCM 11189 / NBRC 100395).